Reading from the N-terminus, the 643-residue chain is MEPVPLQDFVRALDPASLPRVLRVCSGVYFEGSIYEISGNECCLSTGDLIKVTQVRLQKVVCENPKTSQTMELAPNFQGYFTPLNTPQSYETLEELVSATTQSSKQLPTCFMSTHRIVTEGRVVTEDQLLMLEAVVMHLGIRSARCVLGMEGQQVILHLPLSQKGPFWTWEPSAPRTLLQVLQDPALKDLVLTCPTLPWHSLILRPQYEIQAIMHMRRTIVKIPSTLEVDVEDVTASSRHVHFIKPLLLSEVLAWEGPFPLSMEILEVPEGRPIFLSPWVGSLQKGQRLCVYGLASPPWRVLASSKGRKVPRHFLVSGGYQGKLRRRPREFPTAYDLLGAFQPGRPLRVVATKDCEGEREENPEFTSLAVGDRLEVLGPGQAHGAQGSDVDVLVCQRLSDQAGEDEEEECKEEAESPERVLLPFHFPGSFVEEMSDSRRYSLADLTAQFSLPCEVKVVAKDTSHPTDPLTSFLGLRLEEKITEPFLVVSLDSEPGMCFEIPPRWLDLTVVKAKGQPDLPEGSLPIATVEELTDTFYYRLRKLPACEIQAPPPRPPKNQGLSKQRRHSSEGGVKSSQVLGLQQHARLPKPKAKTLPEFIKDGSSTYSKIPAHRKGHRPAKPQRQDLDDDEHDYEEILEQFQKTI.

2 CABIT regions span residues methionine 1–serine 238 and arginine 239–glycine 514. Positions glutamate 546–aspartate 631 are disordered. Threonine 593 carries the post-translational modification Phosphothreonine. Residues proline 609 to lysine 619 show a composition bias toward basic residues. Position 632 is a phosphotyrosine (tyrosine 632).

The protein belongs to the themis family. In terms of assembly, interacts with VAV1. Interacts with LAT. Interacts constitutively with GRB2, LYN and PLCG2; these interactions increase the activation of PLCG2 and its downstream pathways following B cell receptor stimulation. Post-translationally, phosphorylation at Tyr-632 is induced by LPS. Phosphorylated by Src kinases (Lck or Fyn) following BCR engagement. In terms of tissue distribution, expressed in different endometrial adenocarcinoma cell lines and various other cell lines apart from the prostate cell line LNCaP and the ovarian cancer cell line BG1.

The protein localises to the nucleus. It localises to the cytoplasm. In terms of biological role, may constitute a control point in macrophage inflammatory response, promoting LPS-induced TLR4-mediated TNF production. Determines the threshold for activation of B cells by low-affinity and low-avidity ligands via PLCG2 activation and its downstream pathways. This chain is Protein THEMIS2, found in Homo sapiens (Human).